Consider the following 693-residue polypeptide: Elongation factor G (693 aa).

Residues 8–282 form the tr-type G domain; the sequence is EKTRNIGIMA…AVIDYLPSPL (275 aa). GTP-binding positions include 17 to 24, 81 to 85, and 135 to 138; these read AHVDAGKT, DTPGH, and NKMD.

This sequence belongs to the TRAFAC class translation factor GTPase superfamily. Classic translation factor GTPase family. EF-G/EF-2 subfamily.

It localises to the cytoplasm. Functionally, catalyzes the GTP-dependent ribosomal translocation step during translation elongation. During this step, the ribosome changes from the pre-translocational (PRE) to the post-translocational (POST) state as the newly formed A-site-bound peptidyl-tRNA and P-site-bound deacylated tRNA move to the P and E sites, respectively. Catalyzes the coordinated movement of the two tRNA molecules, the mRNA and conformational changes in the ribosome. The chain is Elongation factor G from Streptococcus pneumoniae (strain CGSP14).